The chain runs to 492 residues: N-succinylglutamate 5-semialdehyde dehydrogenase (492 aa).

Residue 220-225 coordinates NAD(+); the sequence is GSANTG. Active-site residues include Glu243 and Cys277.

Belongs to the aldehyde dehydrogenase family. AstD subfamily.

It carries out the reaction N-succinyl-L-glutamate 5-semialdehyde + NAD(+) + H2O = N-succinyl-L-glutamate + NADH + 2 H(+). It participates in amino-acid degradation; L-arginine degradation via AST pathway; L-glutamate and succinate from L-arginine: step 4/5. Catalyzes the NAD-dependent reduction of succinylglutamate semialdehyde into succinylglutamate. This is N-succinylglutamate 5-semialdehyde dehydrogenase from Escherichia coli O139:H28 (strain E24377A / ETEC).